A 477-amino-acid chain; its full sequence is MPGSDTALTVDRTYSDPGRHHRCKSRVDRHDMNTLSLPLNIRRGGSDTNLNFDVPDGILDFHKVKLNADSLRQKILKVTEQIKIEQTSRDGNVAEYLKLVSSADKQQAGRIKQVFEKKNQKSAHSIAQLQKKLEQYHRKLREIEQNGVTRSSKDISKDSLKEIHHSLKDAHVKSRTAPHCLESSKSSMPGVSLTPPVFVFNKSREFANLIRNKFGSADNIAHLKNSLEEFRPEASPRAYGGSATIVNKPKYGSDDECSSGTSGSADSNGNQSFGAGGTSTLDSQGKIAKIMEELREIKVTQTQLAEDIEALKVQFKREYGFISQTLQEERYRYERLEDQLHDLTELHQHETANLKQELASAEEKVAYQAYERSRDIQEALESCQTRISKLELHQQEQQTLQTDAVNAKVLLGKCINVVLAFMTVILVCVSTLAKFVSPMMKSRSHILGTFFAVTLLAIFCKNWDHILCAIERIIIPR.

The segment at methionine 1–lysine 24 is disordered. Residue serine 46 is modified to Phosphoserine. Coiled-coil stretches lie at residues lysine 63–lysine 83 and lysine 112–threonine 149. Positions alanine 234–threonine 280 are disordered. Serine 253 carries the post-translational modification Phosphoserine. Positions serine 258–threonine 280 are enriched in polar residues. The stretch at glutamine 284–glutamine 398 forms a coiled coil. 2 consecutive transmembrane segments (helical) span residues valine 409–valine 429 and phenylalanine 450–isoleucine 470.

Belongs to the TEX28 family. May form homodimers and heterodimers with TMCC2 or TMCC3 via the coiled-coil domains. Interacts with ribosomal proteins RPL4 and RPS6.

It is found in the endoplasmic reticulum membrane. This chain is Transmembrane and coiled-coil domain protein 3, found in Mus musculus (Mouse).